Reading from the N-terminus, the 262-residue chain is 3-methyl-2-oxobutanoate hydroxymethyltransferase (262 aa).

Residues Asp-42 and Asp-81 each coordinate Mg(2+). 3-methyl-2-oxobutanoate is bound by residues Asp-42–Ser-43, Asp-81, and Lys-110. Glu-112 is a Mg(2+) binding site. Glu-180 functions as the Proton acceptor in the catalytic mechanism.

Belongs to the PanB family. In terms of assembly, homodecamer; pentamer of dimers. It depends on Mg(2+) as a cofactor.

It is found in the cytoplasm. It carries out the reaction 3-methyl-2-oxobutanoate + (6R)-5,10-methylene-5,6,7,8-tetrahydrofolate + H2O = 2-dehydropantoate + (6S)-5,6,7,8-tetrahydrofolate. It participates in cofactor biosynthesis; (R)-pantothenate biosynthesis; (R)-pantoate from 3-methyl-2-oxobutanoate: step 1/2. Functionally, catalyzes the reversible reaction in which hydroxymethyl group from 5,10-methylenetetrahydrofolate is transferred onto alpha-ketoisovalerate to form ketopantoate. The sequence is that of 3-methyl-2-oxobutanoate hydroxymethyltransferase from Legionella pneumophila (strain Corby).